The chain runs to 136 residues: ATP synthase epsilon chain (136 aa).

The protein belongs to the ATPase epsilon chain family. As to quaternary structure, F-type ATPases have 2 components, CF(1) - the catalytic core - and CF(0) - the membrane proton channel. CF(1) has five subunits: alpha(3), beta(3), gamma(1), delta(1), epsilon(1). CF(0) has three main subunits: a, b and c.

The protein localises to the cellular thylakoid membrane. Its function is as follows. Produces ATP from ADP in the presence of a proton gradient across the membrane. This Parasynechococcus marenigrum (strain WH8102) protein is ATP synthase epsilon chain.